A 641-amino-acid polypeptide reads, in one-letter code: DNA primase (641 aa).

The segment at 41–65 (CPFHDEKSPSFQVSPSKGFFHCFGC) adopts a CHC2-type zinc-finger fold. A Toprim domain is found at 262 to 346 (SRAVVVEGYT…AAETYIAIAP (85 aa)). Residues Glu268, Asp317, and Asp319 each coordinate Mg(2+). Positions 444–478 (RDRGGKGPAPDQRQRGGGPQQQAGPMTATPRGPAL) are disordered.

The protein belongs to the DnaG primase family. In terms of assembly, monomer. Interacts with DnaB. It depends on Zn(2+) as a cofactor. The cofactor is Mg(2+).

It carries out the reaction ssDNA + n NTP = ssDNA/pppN(pN)n-1 hybrid + (n-1) diphosphate.. In terms of biological role, RNA polymerase that catalyzes the synthesis of short RNA molecules used as primers for DNA polymerase during DNA replication. The polypeptide is DNA primase (Streptomyces coelicolor (strain ATCC BAA-471 / A3(2) / M145)).